The chain runs to 265 residues: Hydroxyethylthiazole kinase (265 aa).

Residue Met-36 participates in substrate binding. 2 residues coordinate ATP: Lys-112 and Ser-160. Gly-187 lines the substrate pocket.

It belongs to the Thz kinase family. Mg(2+) serves as cofactor.

The enzyme catalyses 5-(2-hydroxyethyl)-4-methylthiazole + ATP = 4-methyl-5-(2-phosphooxyethyl)-thiazole + ADP + H(+). It functions in the pathway cofactor biosynthesis; thiamine diphosphate biosynthesis; 4-methyl-5-(2-phosphoethyl)-thiazole from 5-(2-hydroxyethyl)-4-methylthiazole: step 1/1. Catalyzes the phosphorylation of the hydroxyl group of 4-methyl-5-beta-hydroxyethylthiazole (THZ). This Clostridium perfringens (strain SM101 / Type A) protein is Hydroxyethylthiazole kinase.